We begin with the raw amino-acid sequence, 223 residues long: Deoxyribose-phosphate aldolase (223 aa).

The active-site Proton donor/acceptor is the D92. The Schiff-base intermediate with acetaldehyde role is filled by K158. Residue K188 is the Proton donor/acceptor of the active site.

It belongs to the DeoC/FbaB aldolase family. DeoC type 1 subfamily.

It localises to the cytoplasm. It catalyses the reaction 2-deoxy-D-ribose 5-phosphate = D-glyceraldehyde 3-phosphate + acetaldehyde. Its pathway is carbohydrate degradation; 2-deoxy-D-ribose 1-phosphate degradation; D-glyceraldehyde 3-phosphate and acetaldehyde from 2-deoxy-alpha-D-ribose 1-phosphate: step 2/2. Functionally, catalyzes a reversible aldol reaction between acetaldehyde and D-glyceraldehyde 3-phosphate to generate 2-deoxy-D-ribose 5-phosphate. The chain is Deoxyribose-phosphate aldolase from Mycolicibacterium paratuberculosis (strain ATCC BAA-968 / K-10) (Mycobacterium paratuberculosis).